The chain runs to 316 residues: MNPNFLDFEQPIADLQAKIEELRLVGNDNALNISDEISRLQDKSKALTENIFGNLSSWQIAQLARHPKRPYTLDYIGYLFSDFEELHGDRHFADDPAIVGGVARLDGSPVMVIGHQKGREVREKVRRNFGMPRPEGYRKACRLMEMAERFKMPILTFIDTPGAYPGIDAEERGQSEAIAWNLRVMARLKTPIIATVIGEGGSGGALAIGVCDQLNMLQYSTYSVISPEGCASILWKTAEKAPEAAEAMGITAERLKGLGIVDKVIDEPLGGAHRDPASMAESIRGELLAQLKMLQGLEMGELLERRYDRLMSYGAP.

Residues 39 to 293 form the CoA carboxyltransferase C-terminal domain; it reads RLQDKSKALT…RGELLAQLKM (255 aa).

This sequence belongs to the AccA family. Acetyl-CoA carboxylase is a heterohexamer composed of biotin carboxyl carrier protein (AccB), biotin carboxylase (AccC) and two subunits each of ACCase subunit alpha (AccA) and ACCase subunit beta (AccD).

The protein localises to the cytoplasm. It catalyses the reaction N(6)-carboxybiotinyl-L-lysyl-[protein] + acetyl-CoA = N(6)-biotinyl-L-lysyl-[protein] + malonyl-CoA. Its pathway is lipid metabolism; malonyl-CoA biosynthesis; malonyl-CoA from acetyl-CoA: step 1/1. Its function is as follows. Component of the acetyl coenzyme A carboxylase (ACC) complex. First, biotin carboxylase catalyzes the carboxylation of biotin on its carrier protein (BCCP) and then the CO(2) group is transferred by the carboxyltransferase to acetyl-CoA to form malonyl-CoA. The polypeptide is Acetyl-coenzyme A carboxylase carboxyl transferase subunit alpha (Pseudomonas aeruginosa (strain UCBPP-PA14)).